Reading from the N-terminus, the 333-residue chain is Cell division protein FtsQ (333 aa).

Positions 1–99 are disordered; the sequence is MTGTGPHGDP…ARREAKRRAV (99 aa). Residues 1 to 118 lie on the Cytoplasmic side of the membrane; it reads MTGTGPHGDP…VPRNTIRGLK (118 aa). The segment covering 11-22 has biased composition (acidic residues); that stretch reads AEDPAGPDDTAA. Positions 44 to 57 are enriched in low complexity; it reads TTETTAQTGTTAEA. Residues 73–92 are compositionally biased toward basic and acidic residues; sequence ERAERRAARDRAMAIEQARR. Residues 119–139 form a helical membrane-spanning segment; the sequence is VLMWAALVSVLAVALGLLLYF. Over 140–333 the chain is Extracellular; sequence TPIMSARNVE…VSSPDLPTVK (194 aa). The POTRA domain maps to 143–211; that stretch reads MSARNVEVSG…STLKISIVER (69 aa).

It belongs to the FtsQ/DivIB family. FtsQ subfamily.

Its subcellular location is the cell membrane. Its function is as follows. Essential cell division protein. This is Cell division protein FtsQ from Mycolicibacterium smegmatis (strain ATCC 700084 / mc(2)155) (Mycobacterium smegmatis).